The following is an 882-amino-acid chain: Protein PML (882 aa).

The interval 1-48 is disordered; sequence MEPAPARSPRPQQDPARPQEPTMPPPETPSEGRQPSPSPSPTERAPAS. Serine 8 carries the post-translational modification Phosphoserine; by HIPK2. Residues serine 36 and serine 38 each carry the phosphoserine; by HIPK2 and MAPK1 modification. Serine 48 is modified (phosphoserine). Residues cysteine 57 and cysteine 60 each contribute to the Zn(2+) site. The RING-type zinc finger occupies 57–92; the sequence is CQQCQAEAKCPKLLPCLHTLCSGCLEASGMQCPICQ. Lysine 65 participates in a covalent cross-link: Glycyl lysine isopeptide (Lys-Gly) (interchain with G-Cter in SUMO1); alternate. Residue lysine 65 forms a Glycyl lysine isopeptide (Lys-Gly) (interchain with G-Cter in SUMO2); alternate linkage. Residues cysteine 72, histidine 74, cysteine 77, cysteine 80, cysteine 88, and cysteine 91 each coordinate Zn(2+). A Phosphoserine; by CHEK2 modification is found at serine 117. A B box-type 1; atypical zinc finger spans residues 124–166; sequence DAQAVCTRCKESADFWCFECEQLLCAKCFEAHQWFLKHEARPL. The Zn(2+) site is built by cysteine 129, cysteine 132, cysteine 151, and histidine 155. A Glycyl lysine isopeptide (Lys-Gly) (interchain with G-Cter in SUMO1); alternate cross-link involves residue lysine 160. Lysine 160 is covalently cross-linked (Glycyl lysine isopeptide (Lys-Gly) (interchain with G-Cter in SUMO2); alternate). Lysine 160 is covalently cross-linked (Glycyl lysine isopeptide (Lys-Gly) (interchain with G-Cter in SUMO1P1/SUMO5); alternate). Residues 183–236 form a B box-type 2 zinc finger; the sequence is KTNNIFCSNPNHRTPTLTSIYCRGCSKPLCCSCALLDSSHSELKCDISAEIQQR. Positions 189, 194, 215, and 222 each coordinate Zn(2+). Residues 228–253 are a coiled coil; that stretch reads DISAEIQQRQEELDAMTQALQEQDSA. Lysine 380 is covalently cross-linked (Glycyl lysine isopeptide (Lys-Gly) (interchain with G-Cter in SUMO2); alternate). Lysine 380 is covalently cross-linked (Glycyl lysine isopeptide (Lys-Gly) (interchain with G-Cter in /SUMO5); alternate). Lysine 380 is covalently cross-linked (Glycyl lysine isopeptide (Lys-Gly) (interchain with G-Cter in ubiquitin); alternate). Lysine 394 participates in a covalent cross-link: Glycyl lysine isopeptide (Lys-Gly) (interchain with G-Cter in SUMO2). Residue lysine 400 forms a Glycyl lysine isopeptide (Lys-Gly) (interchain with G-Cter in SUMO1P1/SUMO5); alternate linkage. Residues lysine 400 and lysine 401 each participate in a glycyl lysine isopeptide (Lys-Gly) (interchain with G-Cter in ubiquitin); alternate cross-link. Lysine 401 participates in a covalent cross-link: Glycyl lysine isopeptide (Lys-Gly) (interchain with G-Cter in SUMO2); alternate. Serine 403 carries the post-translational modification Phosphoserine; by MAPK1 and MAPK7. Residues 448–555 form an interaction with PER2 region; the sequence is GAHPVPVYAF…ASGAGEAEER (108 aa). Lysine 460 is covalently cross-linked (Glycyl lysine isopeptide (Lys-Gly) (interchain with G-Cter in SUMO2)). Residues 467 to 589 form a disordered region; the sequence is DVSNTTTAQK…SESSDLQLEG (123 aa). A compositionally biased stretch (polar residues) spans 468–484; it reads VSNTTTAQKRKCSQTQC. Lysine 476 participates in a covalent cross-link: Glycyl lysine isopeptide (Lys-Gly) (interchain with G-Cter in SUMO2); alternate. Lysine 476 participates in a covalent cross-link: Glycyl lysine isopeptide (Lys-Gly) (interchain with G-Cter in ubiquitin); alternate. Residues 476 to 490 carry the Nuclear localization signal motif; that stretch reads KRKCSQTQCPRKVIK. Lysine 478 is covalently cross-linked (Glycyl lysine isopeptide (Lys-Gly) (interchain with G-Cter in SUMO2)). Residues lysine 487 and lysine 490 each participate in a glycyl lysine isopeptide (Lys-Gly) (interchain with G-Cter in SUMO2); alternate cross-link. An N6-acetyllysine; alternate modification is found at lysine 487. A compositionally biased stretch (basic and acidic residues) spans 489 to 501; the sequence is IKMESEEGKEARL. Lysine 490 is covalently cross-linked (Glycyl lysine isopeptide (Lys-Gly) (interchain with G-Cter in SUMO1); alternate). Residue lysine 490 forms a Glycyl lysine isopeptide (Lys-Gly) (interchain with G-Cter in SUMO1P1/SUMO5); alternate linkage. The residue at position 493 (serine 493) is a Phosphoserine. Lysine 497 is covalently cross-linked (Glycyl lysine isopeptide (Lys-Gly) (interchain with G-Cter in SUMO1); alternate). A Glycyl lysine isopeptide (Lys-Gly) (interchain with G-Cter in SUMO2); alternate cross-link involves residue lysine 497. Lysine 497 is covalently cross-linked (Glycyl lysine isopeptide (Lys-Gly) (interchain with G-Cter in SUMO1P1/SUMO5); alternate). At serine 504 the chain carries Phosphoserine. Serine 505 carries the post-translational modification Phosphoserine; by MAPK1. Residues 505 to 516 show a composition bias toward polar residues; that stretch reads SPEQPRPSTSKA. Residue serine 512 is modified to Phosphoserine. The residue at position 515 (lysine 515) is an N6-acetyllysine. Phosphoserine occurs at positions 518, 527, and 530. Serine 518 carries the phosphoserine; by CDK1 and CDK2 modification. Phosphoserine; by MAPK1 is present on residues serine 527 and serine 530. Residues 556 to 562 form a sumo interaction motif (SIM) region; sequence VVVISSS. Position 565 is a phosphoserine (serine 565). Serine 565 bears the Phosphoserine; by CK2 mark. Threonine 867 carries the phosphothreonine modification.

As to quaternary structure, key component of PML bodies. PML bodies are formed by the interaction of PML homodimers (via SUMO-binding motif) with sumoylated PML, leading to the assembly of higher oligomers. Several types of PML bodies have been observed. PML bodies can form hollow spheres that can sequester target proteins inside. Interacts (via SUMO-binding motif) with sumoylated proteins. Interacts (via C-terminus) with p53/TP53. Recruits p53/TP53 and CHEK2 into PML bodies, which promotes p53/TP53 phosphorylation at 'Ser-20' and prevents its proteasomal degradation. Interacts with MDM2, and sequesters MDM2 in the nucleolus, thereby preventing ubiquitination of p53/TP53. Interaction with PML-RARA oncoprotein and certain viral proteins causes disassembly of PML bodies and abolishes the normal PML function. Interacts with HIPK2, TERT, SIRT1, TOPBP1, TRIM27 and TRIM69. Interacts with ELF4 (via C-terminus). Interacts with ITPR3. Interacts (in the cytoplasm) with TGFBR1, TGFBR2 and PKM. Interacts (via the coiled-coil domain and when sumoylated) with SATB1. Interacts with UBE2I; the interaction is enhanced by arsenic binding. Interacts (PML-RARA oncoprotein, via the coiled-coil domain) with UBE2I; the interaction is enhanced by arsenic binding and is required for PML-RARA oncoprotein sumoylation and inhibition of RARA transactivational activity. Interacts with RB1, PPP1A, SMAD2, SMAD3, DAXX, RPL11 and MTOR. Interacts with PPARGC1A and KAT2A. Interacts with CSNK2A1 and CSNK2A3. Interacts with ANKRD2; the interaction is direct. Interacts (via SUMO-interacting motif) with sumoylated MORC3. Isoform PML-1, isoform PML-2, isoform PML-3, isoform PML-4, isoform PML-5 and isoform PML-6 interact with RNF4. Isoform PML-1 interacts with NLRP3. Isoform PML-1, isoform PML-2, isoform PML-3, isoform PML-4 and isoform PML-5 interact with MAGEA2, RBL2, PER2 and E2F4. Isoform PML-2 interacts with CIITA. Isoform PML-2, isoform PML-3 and isoform PML-4 interact with TBX2. Isoform PML-4 interacts with RANBP2, HDAC7, KAT6A, WRN, PIN1, TBX3 and phosphorylated MAPK1/ERK2. Isoform PML-4 interacts with the CTNNB1 and TCF7L2/TCF4 complex. Isoform PML-4 preferentially interacts with MAPK7/BMK1 although other isoforms (isoform PML-1, isoform PML-2, isoform PML-3 and isoform PML-6) also interact with it. Isoform PML-12 interacts with PIAS1, PIAS2 (isoform PIAS2-alpha) and CSNK2A1/CK2. Interacts with TRIM16. Interacts with PRDM1/Blimp-1. Interacts (via RING-type zinc finger) with EIF4E; the interaction results in conformational changes of both interacting proteins and reduces EIF4E affinity for the 5' m7G cap of mRNA, thus reducing EIF4E-mediated mRNA nuclear export. In terms of assembly, (Microbial infection) Interacts with Lassa virus Z protein and rabies virus phosphoprotein. (Microbial infection) Isoform PML-1 interacts with herpes simplex virus-1/HHV-1 ICP0. As to quaternary structure, (Microbial infection) Isoform PML-2 interacts with human adenovirus 2 E1A and this interaction stimulates E1A-dependent transcriptional activation. In terms of assembly, (Microbial infection) Isoform PML-4 interacts with VZV capsid protein VP26/ORF23 capsid protein. (Microbial infection) The sumoylated isoform PML-4 interacts with encephalomyocarditis virus (EMCV) RNA-directed RNA polymerase 3D-POL (P3D-POL). As to quaternary structure, (Microbial infection) Isoform PML-6 interacts with moloney murine leukemia virus (MoMLV) integrase (IN) and reverse transcriptase (RT). In terms of assembly, (Microbial infection) Isoform PML-4 and isoform PML-5 interact with human adenovirus 5 E1B-55K protein; these interactions promote efficient subnuclear targeting of E1B-55K to PML nuclear bodies. (Microbial infection) Isoform PML-3 interacts (via RING-type zinc finger) with human foamy virus bel1/tas and bet. As to quaternary structure, (Microbial infection) Interacts with human cytomegalovirus (HHV-5) immediate early protein IE1; this interaction mediates PML desumoylation and PML-mediated sumoylation of IE1. Post-translationally, ubiquitinated; mediated by RNF4, RNF111, UHRF1, UBE3A/E6AP, BCR(KLHL20) E3 ubiquitin ligase complex E3 ligase complex, SIAH1 or SIAH2 and leading to subsequent proteasomal degradation. Ubiquitination by BCR(KLHL20) E3 ubiquitin ligase complex E3 ligase complex requires CDK1/2-mediated phosphorylation at Ser-518 which in turn is recognized by prolyl-isopeptidase PIN1 and PIN1-catalyzed isomerization further potentiates PML interaction with KLHL20. 'Lys-6'-, 'Lys-11'-, 'Lys-48'- and 'Lys-63'-linked polyubiquitination by RNF4 is polysumoylation-dependent. Ubiquitination by RNF111 is polysumoylation-dependent. In terms of processing, sumoylation regulates PML's: stability in response to extracellular or intracellular stimuli, transcription directly and indirectly, through sequestration of or dissociation of the transcription factors from PML-NBs, ability to regulate apoptosis and its anti-viral activities. It is also essential for: maintaining proper PML nuclear bodies (PML-NBs) structure and normal function, recruitment of components of PML-NBs, the turnover and retention of PML in PML-NBs and the integrity of PML-NBs. Undergoes 'Lys-11'-linked sumoylation. Sumoylation on all three sites (Lys-65, Lys-160 and Lys-490) is required for nuclear body formation. Sumoylation on Lys-160 is a prerequisite for sumoylation on Lys-65. Lys-65 and Lys-160 are sumoylated by PISA1 and PIAS2. PIAS1-mediated sumoylation of PML promotes its interaction with CSNK2A1/CK2 and phosphorylation at Ser-565 which in turn triggers its ubiquitin-mediated degradation. PIAS1-mediated sumoylation of PML-RARA promotes its ubiquitin-mediated degradation. The PML-RARA fusion protein requires the coiled-coil domain for sumoylation. Sumoylation at Lys-490 by RANBP2 is essential for the proper assembly of PML-NBs. SUMO1P1/SUMO5 conjugated PML at Lys-160, Lys-380, Lys-400, Lys-490 and Lys-497, but Lys-380, Lys-400 and Lys-497 are not key acceptor lysines. SUMO1P1/SUMO5 forms polymeric chain on Lys-160 of PML by successive conjugation at 'Lys-18'; facilitating recruitment of PML-NB components, which enlarges PML. SUMO1P1/SUMO5 conjugation of PML increases SUMO2/3 conjugation, which leads to the recruitment of RNF4 and ubiquitin-dependent disintegration of PML-NBs. SUMO1P1/SUMO5 monoconjugated Lys-490. DNA damage triggers its sumoylation while some but not all viral infections can abolish sumoylation. Desumoylated by SENP1, SENP2, SENP3, SENP5 and SENP6. Arsenic induces PML and PML-RARA polysumoylation and their subsequent RNF4-dependent ubiquitination and proteasomal degradation, and is used as treatment in acute promyelocytic leukemia (APL). The nuclear isoforms (isoform PML-1, isoform PML-2, isoform PML-3, isoform PML-4, isoform PML-5 and isoform PML-6) show an increased sumoylation in response to arsenic trioxide. The cytoplasmic isoform PML-7 is not sumoylated. Phosphorylation is a major regulatory mechanism that controls PML protein abundance and the number and size of PML nuclear bodies (PML-NBs). Phosphorylated in response to DNA damage, probably by ATR. HIPK2-mediated phosphorylation at Ser-8, Ser-36 and Ser-38 leads to increased accumulation of PML protein and its sumoylation and is required for the maximal pro-apoptotic activity of PML after DNA damage. CHEK2-mediated phosphorylation at Ser-117 is important for PML-mediated apoptosis following DNA damage. MAPK1-mediated phosphorylations at Ser-403, Ser-505, Ser-527 and Ser-530 and CDK1/2-mediated phosphorylation at Ser-518 promote PIN1-dependent PML degradation. CK2-mediated phosphorylation at Ser-565 primes PML ubiquitination via an unidentified ubiquitin ligase. Post-translationally, (Microbial infection) Upon infection with Epstein-Barr virus, phosphorylated by CK2. Viral EBNA1 increases the association of CK2 with PML proteins, which increases PML phosphorylation by CK2, triggering the USP7-dependent polyubiquitylation and degradation of PML. In terms of processing, acetylation at Lys-487 is essential for its nuclear localization. Deacetylated at Lys-487 by SIRT1 and this deacetylation promotes PML control of PER2 nuclear localization. (Microbial infection) Immediate early protein IE1 of human cytomegalovirus (HHV-5) interferes with the sumoylation of PML. Immediate early protein IE1 inhibits PML de novo sumoylation. Post-translationally, (Microbial infection) Cleaved at two different sites by enterovirus 71 protease 3C, leading to impaired PML-Nuclear bodies formation.

The protein resides in the nucleus. It is found in the nucleoplasm. It localises to the cytoplasm. The protein localises to the PML body. Its subcellular location is the nucleolus. The protein resides in the endoplasmic reticulum membrane. It is found in the early endosome membrane. Its pathway is protein modification; protein sumoylation. Functions via its association with PML-nuclear bodies (PML-NBs) in a wide range of important cellular processes, including tumor suppression, transcriptional regulation, apoptosis, senescence, DNA damage response, and viral defense mechanisms. Acts as the scaffold of PML-NBs allowing other proteins to shuttle in and out, a process which is regulated by SUMO-mediated modifications and interactions. Inhibits EIF4E-mediated mRNA nuclear export by reducing EIF4E affinity for the 5' 7-methylguanosine (m7G) cap of target mRNAs. Isoform PML-4 has a multifaceted role in the regulation of apoptosis and growth suppression: activates RB1 and inhibits AKT1 via interactions with PP1 and PP2A phosphatases respectively, negatively affects the PI3K pathway by inhibiting MTOR and activating PTEN, and positively regulates p53/TP53 by acting at different levels (by promoting its acetylation and phosphorylation and by inhibiting its MDM2-dependent degradation). Isoform PML-4 also: acts as a transcriptional repressor of TBX2 during cellular senescence and the repression is dependent on a functional RBL2/E2F4 repressor complex, regulates double-strand break repair in gamma-irradiation-induced DNA damage responses via its interaction with WRN, acts as a negative regulator of telomerase by interacting with TERT, and regulates PER2 nuclear localization and circadian function. Isoform PML-6 inhibits specifically the activity of the tetrameric form of PKM. The nuclear isoforms (isoform PML-1, isoform PML-2, isoform PML-3, isoform PML-4 and isoform PML-5) in concert with SATB1 are involved in local chromatin-loop remodeling and gene expression regulation at the MHC-I locus. Isoform PML-2 is required for efficient IFN-gamma induced MHC II gene transcription via regulation of CIITA. Cytoplasmic PML is involved in the regulation of the TGF-beta signaling pathway. PML also regulates transcription activity of ELF4 and can act as an important mediator for TNF-alpha- and IFN-alpha-mediated inhibition of endothelial cell network formation and migration. Its function is as follows. Exhibits antiviral activity against both DNA and RNA viruses. The antiviral activity can involve one or several isoform(s) and can be enhanced by the permanent PML-NB-associated protein DAXX or by the recruitment of p53/TP53 within these structures. Isoform PML-4 restricts varicella zoster virus (VZV) via sequestration of virion capsids in PML-NBs thereby preventing their nuclear egress and inhibiting formation of infectious virus particles. The sumoylated isoform PML-4 restricts rabies virus by inhibiting viral mRNA and protein synthesis. The cytoplasmic isoform PML-14 can restrict herpes simplex virus-1 (HHV-1) replication by sequestering the viral E3 ubiquitin-protein ligase ICP0 in the cytoplasm. Isoform PML-6 shows restriction activity towards human cytomegalovirus (HHV-5) and influenza A virus strains PR8(H1N1) and ST364(H3N2). Sumoylated isoform PML-4 and isoform PML-12 show antiviral activity against encephalomyocarditis virus (EMCV) by promoting nuclear sequestration of viral polymerase (P3D-POL) within PML NBs. Isoform PML-3 exhibits antiviral activity against poliovirus by inducing apoptosis in infected cells through the recruitment and the activation of p53/TP53 in the PML-NBs. Isoform PML-3 represses human foamy virus (HFV) transcription by complexing the HFV transactivator, bel1/tas, preventing its binding to viral DNA. PML may positively regulate infectious hepatitis C viral (HCV) production and isoform PML-2 may enhance adenovirus transcription. Functions as an E3 SUMO-protein ligase that sumoylates (HHV-5) immediate early protein IE1, thereby participating in the antiviral response. Isoforms PML-3 and PML-6 display the highest levels of sumoylation activity. The polypeptide is Protein PML (PML) (Homo sapiens (Human)).